The sequence spans 144 residues: Large ribosomal subunit protein uL15 (144 aa).

The interval 1–45 is disordered; that stretch reads MNLNTLSPDPGSRPSRRRVGRGIGSGLGKTCGKGHKGQKSRAGGY. The span at 21-31 shows a compositional bias: gly residues; sequence RGIGSGLGKTC.

The protein belongs to the universal ribosomal protein uL15 family. Part of the 50S ribosomal subunit.

Functionally, binds to the 23S rRNA. In Legionella pneumophila (strain Paris), this protein is Large ribosomal subunit protein uL15.